The primary structure comprises 439 residues: GTPase Der (439 aa).

2 EngA-type G domains span residues P4–E168 and I177–T352. GTP-binding positions include G10 to S17, D57 to I61, N120 to D123, G183 to S190, D230 to L234, and N295 to D298. Residues K353–K437 enclose the KH-like domain.

The protein belongs to the TRAFAC class TrmE-Era-EngA-EngB-Septin-like GTPase superfamily. EngA (Der) GTPase family. In terms of assembly, associates with the 50S ribosomal subunit.

In terms of biological role, GTPase that plays an essential role in the late steps of ribosome biogenesis. In Clostridium botulinum (strain Loch Maree / Type A3), this protein is GTPase Der.